The sequence spans 413 residues: Protein arginine N-methyltransferase 2 (413 aa).

A disordered region spans residues 148 to 187 (LDGSDTEMGDKGGSARDVPASADSAPADSAGHSSSEPTAV). A compositionally biased stretch (low complexity) spans 162–182 (ARDVPASADSAPADSAGHSSS). The RMT2 domain occupies 192-413 (TAAHQDTYLQ…HYYHPEISFQ (222 aa)). S-adenosyl-L-methionine is bound by residues Tyr-199, Met-229, 252 to 257 (FGMGII), 273 to 275 (EAH), 300 to 301 (WQ), and Asp-321.

The protein belongs to the class I-like SAM-binding methyltransferase superfamily. RMT2 methyltransferase family. In terms of assembly, monomer.

It localises to the cytoplasm. The protein localises to the nucleus. Its function is as follows. S-adenosyl-L-methionine-dependent protein-arginine N-methyltransferase that methylates the delta-nitrogen atom of arginine residues to form N5-methylarginine (type IV) in target proteins. Monomethylates ribosomal protein L12. The chain is Protein arginine N-methyltransferase 2 from Eremothecium gossypii (strain ATCC 10895 / CBS 109.51 / FGSC 9923 / NRRL Y-1056) (Yeast).